Reading from the N-terminus, the 470-residue chain is MMTAKAVDKIPVTLSGFMHQLPDSLYPVEDLAAPSVTIFPNGELGGPFDQMNGVAGDGMINIDMTGEKRPLDLPYPSSFAPISAPRNQTFTYMGKFSIDPQYPGASCYPEGIINIVSAGILQGVTPPASTTASSSVTSASPNPLATGPLGVCTMSQTQPELDHLYSPPPPPPPYSGCTGDLYQDPSAFLSPPPTTSTSSLAYQPPPSYPSPKPAMDPGLIPMIPDYPGFFPSPCQRDPHGAAGPDRKPFPCPLDSLRVPPPLTPLSTIRNFTLGGPSAGVTGPGASGGGEGPRLPGSGSAAVTATPYNPHHLPLRPILRPRKYPNRPSKTPVHERPYPCPAEGCDRRFSRSDELTRHIRIHTGHKPFQCRICMRNFSRSDHLTTHIRTHTGEKPFACDYCGRKFARSDERKRHTKIHLRQKERKSSAPSSSASAQSSASGPGGSQAGGSLCGNSAIGGPLASCTSRTRTP.

A compositionally biased stretch (low complexity) spans 126 to 141 (PPASTTASSSVTSASP). Disordered stretches follow at residues 126 to 153 (PPAS…GVCT), 159 to 178 (PELD…SGCT), and 184 to 211 (DPSA…YPSP). N6-acetyllysine; by EP300 is present on lysine 247. The disordered stretch occupies residues 275–344 (GPSAGVTGPG…RPYPCPAEGC (70 aa)). Positions 281–291 (TGPGASGGGEG) are enriched in gly residues. 3 consecutive C2H2-type zinc fingers follow at residues 337-361 (YPCP…IRIH), 367-389 (FQCR…IRTH), and 395-417 (FACD…TKIH). Residues 408–470 (DERKRHTKIH…ASCTSRTRTP (63 aa)) are disordered. A compositionally biased stretch (basic residues) spans 412–422 (RHTKIHLRQKE). Low complexity predominate over residues 426–439 (SAPSSSASAQSSAS). Gly residues predominate over residues 440–450 (GPGGSQAGGSL).

The protein belongs to the EGR C2H2-type zinc-finger protein family. In terms of assembly, interacts with HCFC1. Interacts with WWP2. Interacts with UBC9. Interacts with CITED1. Interacts (via phosphorylated form) with SFN. Ubiquitinated by WWP2 leading to proteasomal degradation. In terms of processing, acetylated at Lys-247. May be deacetylated by HDAC6, HDAC10 or SIRT1.

It localises to the nucleus. It participates in protein modification; protein sumoylation. In terms of biological role, sequence-specific DNA-binding transcription factor. Plays a role in hindbrain segmentation by regulating the expression of a subset of homeobox containing genes and in Schwann cell myelination by regulating the expression of genes involved in the formation and maintenance of myelin. Binds to two EGR2-consensus sites EGR2A (5'-CTGTAGGAG-3') and EGR2B (5'-ATGTAGGTG-3') in the HOXB3 enhancer and promotes HOXB3 transcriptional activation. Binds to specific DNA sites located in the promoter region of HOXA4, HOXB2 and ERBB2. Regulates hindbrain segmentation by controlling the expression of Hox genes, such as HOXA4, HOXB3 and HOXB2, and thereby specifying odd and even rhombomeres. Promotes the expression of HOXB3 in the rhombomere r5 in the hindbrain. Regulates myelination in the peripheral nervous system after birth, possibly by regulating the expression of myelin proteins, such as MPZ, and by promoting the differentiation of Schwann cells. Involved in the development of the jaw openener musculature, probably by playing a role in its innervation through trigeminal motor neurons. May play a role in adipogenesis, possibly by regulating the expression of CEBPB. E3 SUMO-protein ligase helping SUMO1 conjugation to its coregulators NAB1 and NAB2, whose sumoylation down-regulates EGR2 transcriptional activity. This Rattus norvegicus (Rat) protein is E3 SUMO-protein ligase EGR2 (Egr2).